A 276-amino-acid chain; its full sequence is TIMELESS-interacting protein (276 aa).

Residues 1 to 54 (MLEQEENGLFEIPDYEHVEDETFPPFPPPGSPERDPAEAEPDEGSGAPVPVPPK) form a disordered region. The interaction with TIMELESS stretch occupies residues 64 to 140 (LDATRLTSER…KEVQTCLKRI (77 aa)). Polar residues predominate over residues 217-243 (SNSQSLENDVTVEESSTGENQEESNGL). The tract at residues 217-276 (SNSQSLENDVTVEESSTGENQEESNGLISADGPHDVPSASTQEEGQLEAEETQLDHPNLD) is disordered. A Phosphoserine modification is found at S219. Position 233 is a phosphothreonine (T233).

The protein belongs to the CSM3 family. In terms of assembly, interacts with TIMELESS, which impairs TIMELESS self-association (via N-terminus). Associates with the MCM2-7 complex. Interacts with RPA2, PRDX2.

It localises to the cytoplasm. It is found in the nucleus. Its function is as follows. Plays an important role in the control of DNA replication and the maintenance of replication fork stability. Important for cell survival after DNA damage or replication stress. May be specifically required for the ATR-CHEK1 pathway in the replication checkpoint induced by hydroxyurea or ultraviolet light. Forms a complex with TIMELESS and this complex regulates DNA replication processes under both normal and stress conditions, stabilizes replication forks and influences both CHEK1 phosphorylation and the intra-S phase checkpoint in response to genotoxic stress. This Rattus norvegicus (Rat) protein is TIMELESS-interacting protein (Tipin).